The primary structure comprises 950 residues: Double-stranded RNA-binding protein Staufen homolog (950 aa).

Disordered regions lie at residues 25–168 (VSGA…QQQQ), 202–274 (QQQL…QPST), and 288–342 (VTPV…NTKE). Residues 31 to 43 (QQRSMMSQQRGGS) show a composition bias toward low complexity. Polar residues predominate over residues 45–66 (AINSSKSPYQLQTSSISQFSHL). The span at 67-77 (QQQQQQQQQQQ) shows a compositional bias: low complexity. The span at 78–122 (LVNNYHKQKQMSPDITSHQFSSSTGGGMPTQNGNYQSMSGSSIHT) shows a compositional bias: polar residues. 3 stretches are compositionally biased toward low complexity: residues 130 to 143 (QLSLQHQHHQYSSQ), 153 to 168 (QQHHYQSQQMTQQQQQ), and 202 to 253 (QQQL…ILQH). The segment covering 254–274 (SPTSGKSLSSAPHGTSVQPST) has biased composition (polar residues). A compositionally biased stretch (basic and acidic residues) spans 313–322 (SGRDSVHVSD). DRBM domains lie at 344–411 (TPMC…ETKC), 435–546 (TPTV…ILKN), 578–645 (SEIS…ELRK), and 690–758 (NPIS…LLGY). 2 disordered regions span residues 758 to 833 (YTKP…HTAS) and 922 to 950 (DIHPGGDGPQVKKDVLARSGSGMKKDFSK). Polar residues predominate over residues 765–782 (PTKSSFKNPSTGEAGQTN). A compositionally biased stretch (basic and acidic residues) spans 922 to 937 (DIHPGGDGPQVKKDVL).

As to expression, strongly expressed in nervous tissue (at protein level).

The protein localises to the perikaryon. It localises to the cell projection. RNA-binding protein which is required for syntaxin location in sensory neurons during long-term synaptic facilitation. Binds to syntaxin mRNA and is required to maintain its accumulation at the axon hillock following neuronal stimulation and at the opposite pole in stable unstimulated sensory neurons. This is Double-stranded RNA-binding protein Staufen homolog from Aplysia californica (California sea hare).